A 357-amino-acid chain; its full sequence is Alanine racemase (357 aa).

K34 acts as the Proton acceptor; specific for D-alanine in catalysis. At K34 the chain carries N6-(pyridoxal phosphate)lysine. R127 contributes to the substrate binding site. The active-site Proton acceptor; specific for L-alanine is Y252. M301 provides a ligand contact to substrate.

This sequence belongs to the alanine racemase family. It depends on pyridoxal 5'-phosphate as a cofactor.

The catalysed reaction is L-alanine = D-alanine. It participates in amino-acid biosynthesis; D-alanine biosynthesis; D-alanine from L-alanine: step 1/1. Functionally, catalyzes the interconversion of L-alanine and D-alanine. May also act on other amino acids. This Dichelobacter nodosus (strain VCS1703A) protein is Alanine racemase (alr).